A 214-amino-acid chain; its full sequence is Adenylate kinase (214 aa).

Residue 10-15 coordinates ATP; that stretch reads GAGKGT. An NMP region spans residues 30–59; sequence STGDMLRAAVKAGTPLGLEAKKVMDAGQLV. Residues Thr-31, Arg-36, 57–59, 85–88, and Gln-92 contribute to the AMP site; these read QLV and GFPR. The LID stretch occupies residues 122–159; the sequence is GRRVHPGSGRVYHVVFNPPKVEGKDDVTGEDLAIRPDD. ATP contacts are provided by residues Arg-123 and 132-133; that span reads VY. AMP is bound by residues Arg-156 and Arg-167. Residue Gln-200 participates in ATP binding.

The protein belongs to the adenylate kinase family. As to quaternary structure, monomer.

It localises to the cytoplasm. The enzyme catalyses AMP + ATP = 2 ADP. Its pathway is purine metabolism; AMP biosynthesis via salvage pathway; AMP from ADP: step 1/1. Functionally, catalyzes the reversible transfer of the terminal phosphate group between ATP and AMP. Plays an important role in cellular energy homeostasis and in adenine nucleotide metabolism. This is Adenylate kinase from Shewanella putrefaciens (strain CN-32 / ATCC BAA-453).